The sequence spans 511 residues: Ulvan-active sulfatase (511 aa).

An N-terminal signal peptide occupies residues 1 to 34 (MNFKQNIVYKKMAISMKITAIRPIALVISFTLLS). The N-palmitoyl cysteine moiety is linked to residue Cys-35. Residue Cys-35 is the site of S-diacylglycerol cysteine attachment. Residues Asp-59 and Cys-99 each contribute to the Ca(2+) site. The active-site Nucleophile is the Cys-99. The residue at position 99 (Cys-99) is a 3-oxoalanine (Cys). His-149 is an active-site residue. Asp-305 is a binding site for Ca(2+).

It belongs to the sulfatase family. The cofactor is Ca(2+). Post-translationally, the conversion to 3-oxoalanine (also known as C-formylglycine, FGly), of a serine or cysteine residue in prokaryotes and of a cysteine residue in eukaryotes, is critical for catalytic activity. This post-translational modification is severely defective in multiple sulfatase deficiency (MSD).

The protein resides in the cell membrane. Its function is as follows. Sulfatase involved in ulvan degradation. Ulvan is the main polysaccharide component of the Ulvales (green seaweed) cell wall. It is composed of disaccharide building blocks comprising 3-sulfated rhamnose (Rha3S) linked to D-glucuronic acid (GlcA), L-iduronic acid (IduA), or D-xylose (Xyl). This is Ulvan-active sulfatase from Formosa agariphila (strain DSM 15362 / KCTC 12365 / LMG 23005 / KMM 3901 / M-2Alg 35-1).